The sequence spans 486 residues: MTDLIKLTIAQSHKLLKERKLSSAELTRAHLDRIEKLEPEIKAFMTVCPESALAQAKAADEAIKQGHIRPLTGIPMALKDVLCTKGIRTTCSSRMLENFVPPYNAHVVDKLAEEGAVLLGKTNMDEFAMGSSTENSAFFTTHNPWNTAKVPGGSSGGSAACVAASEAVFSLGSDTGGSIRQPASFCSVTGLKPSYGMVSRYGLVAFASSLDQIGPFTKDVLDCALVMNAIAGFDDRDSTSVPQTAPDFSSCLDGDIKGFKLGVPKEYFSHNMRADIAEKINDALGVLSGLGASVDREVSLPHTPYALAVYYILAPSEASANLSRYDGVKYGYSYNQTENMWEAMEKTRAKGFGPEVKRRIMIGTYALSAGYYDAWYVKAQKVRTLISQEFNNAFEKYDALITPTTPNLPFSIGEKLSDPFEMYMCDTCTIPINIAGLPAISIPAGFVDGLPVGLQIIGKPFADQTIMRIAHAFQCATAWHKETPRL.

Active-site charge relay system residues include lysine 79 and serine 154. The active-site Acyl-ester intermediate is the serine 178.

Belongs to the amidase family. GatA subfamily. In terms of assembly, heterotrimer of A, B and C subunits.

The enzyme catalyses L-glutamyl-tRNA(Gln) + L-glutamine + ATP + H2O = L-glutaminyl-tRNA(Gln) + L-glutamate + ADP + phosphate + H(+). In terms of biological role, allows the formation of correctly charged Gln-tRNA(Gln) through the transamidation of misacylated Glu-tRNA(Gln) in organisms which lack glutaminyl-tRNA synthetase. The reaction takes place in the presence of glutamine and ATP through an activated gamma-phospho-Glu-tRNA(Gln). The polypeptide is Glutamyl-tRNA(Gln) amidotransferase subunit A (Dehalococcoides mccartyi (strain ATCC BAA-2266 / KCTC 15142 / 195) (Dehalococcoides ethenogenes (strain 195))).